A 388-amino-acid polypeptide reads, in one-letter code: Mannitol-1-phosphate 5-dehydrogenase (388 aa).

Position 3 to 14 (3 to 14 (ALHFGAGNIGRG)) interacts with NAD(+).

It belongs to the mannitol dehydrogenase family.

It carries out the reaction D-mannitol 1-phosphate + NAD(+) = beta-D-fructose 6-phosphate + NADH + H(+). The polypeptide is Mannitol-1-phosphate 5-dehydrogenase (Buchnera aphidicola subsp. Schizaphis graminum (strain Sg)).